Consider the following 272-residue polypeptide: Acetylglutamate kinase (272 aa).

Substrate-binding positions include 46–47 (GA), Arg68, and Asn166.

Belongs to the acetylglutamate kinase family. ArgB subfamily.

Its subcellular location is the cytoplasm. It catalyses the reaction N-acetyl-L-glutamate + ATP = N-acetyl-L-glutamyl 5-phosphate + ADP. Its pathway is amino-acid biosynthesis; L-arginine biosynthesis; N(2)-acetyl-L-ornithine from L-glutamate: step 2/4. Functionally, catalyzes the ATP-dependent phosphorylation of N-acetyl-L-glutamate. In Dehalococcoides mccartyi (strain ATCC BAA-2266 / KCTC 15142 / 195) (Dehalococcoides ethenogenes (strain 195)), this protein is Acetylglutamate kinase.